Here is a 236-residue protein sequence, read N- to C-terminus: uncharacterized protein (236 aa).

The protein to M.tuberculosis Rv2557.

This is an uncharacterized protein from Mycobacterium tuberculosis (strain CDC 1551 / Oshkosh).